The chain runs to 218 residues: uncharacterized protein (218 aa).

The region spanning 4 to 83 (GISIEAENKV…IHSSLKKIYG (80 aa)) is the ACT domain.

This is an uncharacterized protein from Methanocaldococcus jannaschii (strain ATCC 43067 / DSM 2661 / JAL-1 / JCM 10045 / NBRC 100440) (Methanococcus jannaschii).